A 471-amino-acid chain; its full sequence is Trehalose-binding lipoprotein LpqY (471 aa).

Residues 1-28 (MDGRQVVRARRWCATAAVALMTASTVAA) form the signal peptide. Cys29 carries N-palmitoyl cysteine lipidation. Cys29 carries S-diacylglycerol cysteine lipidation. Residues Asn45, Glu46, Gln79, Asp100, Asn154, Tyr198, Trp279, Tyr281, Gly354, and Arg424 each contribute to the alpha,alpha-trehalose site. Cys57 and Cys375 are joined by a disulfide.

It belongs to the bacterial solute-binding protein 1 family. Monomer. The complex is composed of two ATP-binding proteins (SugC), two transmembrane proteins (SugA and SugB) and a solute-binding protein (LpqY).

The protein localises to the cell inner membrane. In terms of biological role, part of the ABC transporter complex LpqY-SugA-SugB-SugC, which is highly specific for uptake of trehalose. Involved in the recycling of extracellular trehalose released from trehalose-containing molecules synthesized by M.thermoresistibile. Trehalose uptake is essential for virulence. Binds deuterated trehalose with similar high affinity to trehalose, trehalose analogs including galactotrehalose, 4-azido-4-deoxy-trehalose, 6-azido-6-deoxy-trehalose, 3-azido-3-deoxy-trehalose and mannotrehalose in the order of decreasing affinity, respectively, and 2-azido-2-deoxy-trehalose and kojibiose (alpha1,2-glycosidic bond) with very low affinity. Does not recognize single glucose, 6-amino-6-deoxy-trehalose, trehalose-6-phosphate, nigerose (alpha1,3-glycosidic bond), maltose (alpha1,4-glycosidic bond), isomaltose (alpha1,6-glycosidic bond) or glycerophosphocholine. Decreased recognition of alpha,beta-trehalose and almost no recognition of beta,beta-trehalose. Substrate specificity indicates a strict requirement for an alpha1,1-linked disaccharide. This chain is Trehalose-binding lipoprotein LpqY, found in Mycolicibacterium thermoresistibile (strain ATCC 19527 / DSM 44167 / CIP 105390 / JCM 6362 / NCTC 10409 / 316) (Mycobacterium thermoresistibile).